We begin with the raw amino-acid sequence, 277 residues long: Probable endonuclease 4 (277 aa).

Positions 70, 108, 145, 178, 181, 212, 225, 227, and 257 each coordinate Zn(2+).

The protein belongs to the AP endonuclease 2 family. Zn(2+) is required as a cofactor.

It carries out the reaction Endonucleolytic cleavage to 5'-phosphooligonucleotide end-products.. In terms of biological role, endonuclease IV plays a role in DNA repair. It cleaves phosphodiester bonds at apurinic or apyrimidinic (AP) sites, generating a 3'-hydroxyl group and a 5'-terminal sugar phosphate. The chain is Probable endonuclease 4 from Mycoplasmopsis pulmonis (strain UAB CTIP) (Mycoplasma pulmonis).